A 290-amino-acid polypeptide reads, in one-letter code: Cbb3-type cytochrome c oxidase subunit FixP (290 aa).

The helical transmembrane segment at 33-53 (WWVITFYITIVWAIGYWIVYP) threads the bilayer. Cytochrome c domains lie at 109 to 198 (LARA…RSLS) and 206 to 287 (YDAA…HSLG). Residues Cys122, Cys125, His126, Met173, Cys219, Cys222, His223, and Met264 each coordinate heme c.

It belongs to the CcoP / FixP family. Component of the cbb3-type cytochrome c oxidase at least composed of FixN, FixO, FixQ and FixP. The cofactor is heme c.

Its subcellular location is the cell inner membrane. The protein operates within energy metabolism; oxidative phosphorylation. In terms of biological role, C-type cytochrome. Part of the cbb3-type cytochrome c oxidase complex. FixP subunit is required for transferring electrons from donor cytochrome c via its heme groups to FixO subunit. From there, electrons are shuttled to the catalytic binuclear center of FixN subunit where oxygen reduction takes place. The complex also functions as a proton pump. The protein is Cbb3-type cytochrome c oxidase subunit FixP of Bradyrhizobium sp. (strain ORS 278).